Here is an 811-residue protein sequence, read N- to C-terminus: Glycerol-3-phosphate acyltransferase (811 aa).

Positions 308–313 match the HXXXXD motif motif; it reads CHRSHM.

It belongs to the GPAT/DAPAT family.

The protein localises to the cell inner membrane. It catalyses the reaction sn-glycerol 3-phosphate + an acyl-CoA = a 1-acyl-sn-glycero-3-phosphate + CoA. It functions in the pathway phospholipid metabolism; CDP-diacylglycerol biosynthesis; CDP-diacylglycerol from sn-glycerol 3-phosphate: step 1/3. In Pseudoalteromonas atlantica (strain T6c / ATCC BAA-1087), this protein is Glycerol-3-phosphate acyltransferase.